The primary structure comprises 92 residues: Small ribosomal subunit protein uS19 (92 aa).

The protein belongs to the universal ribosomal protein uS19 family.

Functionally, protein S19 forms a complex with S13 that binds strongly to the 16S ribosomal RNA. This Geobacillus stearothermophilus (Bacillus stearothermophilus) protein is Small ribosomal subunit protein uS19 (rpsS).